The sequence spans 471 residues: Metalloprotease TIKI homolog (471 aa).

Residues 1-24 (MAAFTLWILVLNVFLLGFQARKLA) form the signal peptide. Residues 25–449 (SNLKFPIQKC…SRKAAASCTP (425 aa)) are Extracellular-facing. N-linked (GlcNAc...) asparagine glycans are attached at residues Asn226, Asn235, Asn284, and Asn342. Positions 369–402 (KAKKSLNTRRERRKGCRGRRKKSKRCQKKKKRKR) are enriched in basic residues. A disordered region spans residues 369-406 (KAKKSLNTRRERRKGCRGRRKKSKRCQKKKKRKRPDYS). Residues 450–470 (IWTVSLALTCAVTCLLTYSGF) traverse the membrane as a helical segment. Residue Arg471 is a topological domain, cytoplasmic.

It belongs to the TIKI family. Requires Mn(2+) as cofactor. It depends on Co(2+) as a cofactor.

The protein localises to the membrane. In terms of biological role, metalloprotease. The polypeptide is Metalloprotease TIKI homolog (Nematostella vectensis (Starlet sea anemone)).